Here is a 131-residue protein sequence, read N- to C-terminus: D-ribose pyranase (131 aa).

The active-site Proton donor is the histidine 20. Residues aspartate 28, histidine 98, and tyrosine 120 to asparagine 122 each bind substrate.

The protein belongs to the RbsD / FucU family. RbsD subfamily. As to quaternary structure, homodecamer.

It is found in the cytoplasm. It carries out the reaction beta-D-ribopyranose = beta-D-ribofuranose. Its pathway is carbohydrate metabolism; D-ribose degradation; D-ribose 5-phosphate from beta-D-ribopyranose: step 1/2. Catalyzes the interconversion of beta-pyran and beta-furan forms of D-ribose. In Clostridium perfringens (strain SM101 / Type A), this protein is D-ribose pyranase.